A 207-amino-acid polypeptide reads, in one-letter code: Uridine kinase (207 aa).

G11–T18 contacts ATP.

The protein belongs to the uridine kinase family.

It is found in the cytoplasm. It carries out the reaction uridine + ATP = UMP + ADP + H(+). It catalyses the reaction cytidine + ATP = CMP + ADP + H(+). The protein operates within pyrimidine metabolism; CTP biosynthesis via salvage pathway; CTP from cytidine: step 1/3. Its pathway is pyrimidine metabolism; UMP biosynthesis via salvage pathway; UMP from uridine: step 1/1. The chain is Uridine kinase from Staphylococcus aureus (strain Mu3 / ATCC 700698).